Here is a 784-residue protein sequence, read N- to C-terminus: DNA repair and recombination protein RAD54-like (784 aa).

A disordered region spans residues 1–54 (MRRSLAPSQRGPMRPESRHSFTPPLLKKNKRSCQQELEREQELDRKRQSALRDA). The segment at 2 to 9 (RRSLAPSQ) is required for chromatin remodeling, strand pairing activities and coupling of ATPase activity. Phosphoserine is present on Ser20. Residue Thr22 is modified to Phosphothreonine. Residues 36-47 (ELEREQELDRKR) show a composition bias toward basic and acidic residues. In terms of domain architecture, Helicase ATP-binding spans 172–346 (EGKRGNFNGC…YSLVNFVNPE (175 aa)). Position 185-192 (185-192 (DEMGLGKT)) interacts with ATP. The short motif at 297-300 (DEGH) is the DEGH box element. The region spanning 503–660 (LLDFMLAAIR…NNESAEKHFT (158 aa)) is the Helicase C-terminal domain. Residues 751–784 (EEAASEQPEEKPDRRKRPSTPPSDDSADEDFLGF) form a disordered region. Residues 775–784 (DSADEDFLGF) show a composition bias toward acidic residues.

This sequence belongs to the SNF2/RAD54 helicase family. Interacts (via N-terminus) with spn-A/Rad51.

The protein localises to the nucleus. Functionally, involved in mitotic DNA repair and meiotic recombination. Functions in the recombinational DNA repair pathway. Essential for interhomolog gene conversion (GC), but may have a less important role in intersister GC than spn-A/Rad51. In the presence of DNA, spn-A/Rad51 enhances the ATPase activity of okr/Rad54. The chain is DNA repair and recombination protein RAD54-like from Drosophila yakuba (Fruit fly).